We begin with the raw amino-acid sequence, 177 residues long: MKQILNILPMFIFFIFYKFYDIFIASGSLIVISGLICIIHWILYNEIDKISLFSFLSVFFFGSLTIFFHNSQFIKWKITIIYIIFSLVLLISQFFTRKPMIQRFLEKDIKISNIYWRKINFIWSLFFLFCAILNIYIAYYFSETIWVNFKVFGFTSLTFFLILITSIYINCKISKNK.

A run of 5 helical transmembrane segments spans residues 22 to 42 (IFIASGSLIVISGLICIIHWI), 50 to 70 (ISLFSFLSVFFFGSLTIFFHN), 76 to 96 (WKITIIYIIFSLVLLISQFFT), 121 to 141 (FIWSLFFLFCAILNIYIAYYF), and 149 to 169 (FKVFGFTSLTFFLILITSIYI).

Belongs to the YciB family.

It is found in the cell inner membrane. Plays a role in cell envelope biogenesis, maintenance of cell envelope integrity and membrane homeostasis. The polypeptide is Inner membrane-spanning protein YciB (Buchnera aphidicola subsp. Acyrthosiphon pisum (strain 5A)).